A 357-amino-acid chain; its full sequence is Elongation factor Ts (357 aa).

Residues 82–85 (TDFV) form an involved in Mg(2+) ion dislocation from EF-Tu region.

Belongs to the EF-Ts family.

It is found in the cytoplasm. Functionally, associates with the EF-Tu.GDP complex and induces the exchange of GDP to GTP. It remains bound to the aminoacyl-tRNA.EF-Tu.GTP complex up to the GTP hydrolysis stage on the ribosome. This chain is Elongation factor Ts, found in Campylobacter jejuni subsp. jejuni serotype O:2 (strain ATCC 700819 / NCTC 11168).